Consider the following 266-residue polypeptide: Putative carbamate hydrolase RutD (266 aa).

The protein belongs to the AB hydrolase superfamily. Hydrolase RutD family.

It catalyses the reaction carbamate + 2 H(+) = NH4(+) + CO2. Functionally, involved in pyrimidine catabolism. May facilitate the hydrolysis of carbamate, a reaction that can also occur spontaneously. The protein is Putative carbamate hydrolase RutD of Escherichia coli O157:H7.